The following is a 284-amino-acid chain: D-tagatose-1,6-bisphosphate aldolase subunit GatY (284 aa).

Aspartate 82 acts as the Proton donor in catalysis. 2 residues coordinate Zn(2+): histidine 83 and histidine 180. Dihydroxyacetone phosphate is bound at residue glycine 181. Residue histidine 208 coordinates Zn(2+). Dihydroxyacetone phosphate is bound by residues 209–211 (GAS) and 230–233 (NVAT).

Belongs to the class II fructose-bisphosphate aldolase family. TagBP aldolase GatY subfamily. Forms a complex with GatZ. The cofactor is Zn(2+).

It catalyses the reaction D-tagatofuranose 1,6-bisphosphate = D-glyceraldehyde 3-phosphate + dihydroxyacetone phosphate. It participates in carbohydrate metabolism; D-tagatose 6-phosphate degradation; D-glyceraldehyde 3-phosphate and glycerone phosphate from D-tagatose 6-phosphate: step 2/2. Catalytic subunit of the tagatose-1,6-bisphosphate aldolase GatYZ, which catalyzes the reversible aldol condensation of dihydroxyacetone phosphate (DHAP or glycerone-phosphate) with glyceraldehyde 3-phosphate (G3P) to produce tagatose 1,6-bisphosphate (TBP). Requires GatZ subunit for full activity and stability. Is involved in the catabolism of galactitol. The chain is D-tagatose-1,6-bisphosphate aldolase subunit GatY from Escherichia coli O6:K15:H31 (strain 536 / UPEC).